A 192-amino-acid chain; its full sequence is Peptidyl-tRNA hydrolase (192 aa).

Residue Y18 coordinates tRNA. Catalysis depends on H23, which acts as the Proton acceptor. Positions 69, 71, and 117 each coordinate tRNA.

Belongs to the PTH family. Monomer.

The protein resides in the cytoplasm. The catalysed reaction is an N-acyl-L-alpha-aminoacyl-tRNA + H2O = an N-acyl-L-amino acid + a tRNA + H(+). Its function is as follows. Hydrolyzes ribosome-free peptidyl-tRNAs (with 1 or more amino acids incorporated), which drop off the ribosome during protein synthesis, or as a result of ribosome stalling. In terms of biological role, catalyzes the release of premature peptidyl moieties from peptidyl-tRNA molecules trapped in stalled 50S ribosomal subunits, and thus maintains levels of free tRNAs and 50S ribosomes. The polypeptide is Peptidyl-tRNA hydrolase (Neisseria meningitidis serogroup A / serotype 4A (strain DSM 15465 / Z2491)).